Consider the following 482-residue polypeptide: MTGISLPPELQRVHMVGIGGAGMSGVARILLDRGGLVSGSDAKESRGVVALRARGAEIRIGHDASSLDLLPGGPTAVVTTHAAIPKTNPELVEARKRGIPVILRPVVLAKLMTGYTTLMVTGTHGKTTTTSMLIVALQHSGFDPSFAVGGELGEAGTNAHHGSGTTFVAEADESDGSLLEYTPNVAVVTNIEADHLDFFGSEQAYTAVFDSFVERIAPGGALVVCTDDPGAAALADRTDALGIRVLRYGSTGDNLAGTLLSWEQQGTGAVAHIRLAGEHNPRAVRLSVPGRHMALNALAALLAAREIGAPTDSVLDGLAGFEGVRRRFELVGTAAGARVFDDYAHHPTEVRATLEAARTVVDQNGGRVVVAFQPHLYSRTATFAHEFGAALSVADQVVVLDVYAAREQPMAGVSGATVADHVTAPVTYVPDFSAVAAHVASIARSGDVILTMGAGDVTMLGGEILSELRLKDNRGMPGAGAS.

An ATP-binding site is contributed by Gly-122–Thr-128.

This sequence belongs to the MurCDEF family.

It is found in the cytoplasm. The catalysed reaction is UDP-N-acetyl-alpha-D-muramate + L-alanine + ATP = UDP-N-acetyl-alpha-D-muramoyl-L-alanine + ADP + phosphate + H(+). It functions in the pathway cell wall biogenesis; peptidoglycan biosynthesis. Its function is as follows. Cell wall formation. The protein is UDP-N-acetylmuramate--L-alanine ligase of Mycolicibacterium smegmatis (strain ATCC 700084 / mc(2)155) (Mycobacterium smegmatis).